The following is a 692-amino-acid chain: Elongation factor G (692 aa).

Residues 8 to 283 form the tr-type G domain; the sequence is QDLRNIGIVA…AVVDYLPSPL (276 aa). GTP contacts are provided by residues 17-24, 81-85, and 135-138; these read AHIDAGKT, DTPGH, and NKLD.

The protein belongs to the TRAFAC class translation factor GTPase superfamily. Classic translation factor GTPase family. EF-G/EF-2 subfamily.

The protein localises to the cytoplasm. In terms of biological role, catalyzes the GTP-dependent ribosomal translocation step during translation elongation. During this step, the ribosome changes from the pre-translocational (PRE) to the post-translocational (POST) state as the newly formed A-site-bound peptidyl-tRNA and P-site-bound deacylated tRNA move to the P and E sites, respectively. Catalyzes the coordinated movement of the two tRNA molecules, the mRNA and conformational changes in the ribosome. This chain is Elongation factor G, found in Hydrogenobaculum sp. (strain Y04AAS1).